Consider the following 557-residue polypeptide: Probable protein kinase UbiB (557 aa).

The 389-residue stretch at 121-509 folds into the Protein kinase domain; it reads AFDTTPLASA…RKLQTRVVTA (389 aa). Residues 127–135 and Lys154 each bind ATP; that span reads LASASIAQV. The active-site Proton acceptor is Asp289. 2 helical membrane passes run 506–526 and 535–555; these read VVTAITGSGLLVVAAVLYGLH and VPVWSWISGGAGSAALLIAWL.

The protein belongs to the ABC1 family. UbiB subfamily.

The protein localises to the cell inner membrane. It participates in cofactor biosynthesis; ubiquinone biosynthesis [regulation]. In terms of biological role, is probably a protein kinase regulator of UbiI activity which is involved in aerobic coenzyme Q (ubiquinone) biosynthesis. The protein is Probable protein kinase UbiB of Xanthomonas campestris pv. campestris (strain 8004).